The chain runs to 489 residues: MSVYGLQRLYIGGGYVDATSGKTFDTFDPATGELLAQVQQASAADVDRAVASAQEGQREWAAMTAMQRSRILRRAVELLRERNDELAAIETRDTGKPIGETLAVDIVTGADVIEYYAGLATAIEGLQVPLRAESFVYTRREPLGVCAGIGAWNYPIQIACWKTAPALAAGNAMVFKPSEVTPLTALKLAEIYTEAGVPAGVFNVVQGDGSVGALLTGHPDIAKVSFTGGVETGKKVMSLAGASSLKEVTMELGGKSPLIVFDDADLDRAADIAVTANFFSSGQVCTNGTRVFVHRSIKDAFTQKVLERVKRIRVGKPTDADTNFGPLVSAAQLDKVLGFIESGKAEGAKLLAGGTRLTDGHFGSGQYVAPTVFGDCRDDMKIVREEIFGPVMSILEFESEDEVIARANDTHYGLAAGVVTENLSRAHRAIHRLEAGICWINTWGESPAEMPVGGYKQSGVGRENGITTLEHYTRIKSVQVELGRYNPVF.

2 residues coordinate K(+): T26 and D93. 150 to 152 (GAW) lines the NAD(+) pocket. Residue K162 is the Charge relay system of the active site. 176-179 (KPSE) lines the NAD(+) pocket. V180 serves as a coordination point for K(+). An NAD(+)-binding site is contributed by 229–232 (GVET). Residue L245 participates in K(+) binding. The active-site Proton acceptor is the E251. Residues G253, C285, and E386 each coordinate NAD(+). The active-site Nucleophile is C285. C285 bears the Cysteine sulfenic acid (-SOH) mark. K(+) contacts are provided by K456 and G459. The active-site Charge relay system is E463.

Belongs to the aldehyde dehydrogenase family. Dimer of dimers. Requires K(+) as cofactor.

The enzyme catalyses betaine aldehyde + NAD(+) + H2O = glycine betaine + NADH + 2 H(+). It functions in the pathway amine and polyamine biosynthesis; betaine biosynthesis via choline pathway; betaine from betaine aldehyde: step 1/1. Functionally, involved in the biosynthesis of the osmoprotectant glycine betaine. Catalyzes the irreversible oxidation of betaine aldehyde to the corresponding acid. The sequence is that of Betaine aldehyde dehydrogenase from Burkholderia orbicola (strain AU 1054).